The sequence spans 146 residues: Large ribosomal subunit protein uL13 (146 aa).

This sequence belongs to the universal ribosomal protein uL13 family. In terms of assembly, part of the 50S ribosomal subunit.

This protein is one of the early assembly proteins of the 50S ribosomal subunit, although it is not seen to bind rRNA by itself. It is important during the early stages of 50S assembly. This Sulfurisphaera tokodaii (strain DSM 16993 / JCM 10545 / NBRC 100140 / 7) (Sulfolobus tokodaii) protein is Large ribosomal subunit protein uL13.